A 222-amino-acid polypeptide reads, in one-letter code: Eukaryotic translation initiation factor 4E-2 (222 aa).

Positions 1–20 (MVDEVEKPVSLEESKTNTRE) are enriched in basic and acidic residues. The disordered stretch occupies residues 1–35 (MVDEVEKPVSLEESKTNTREVEEEGEIVGESDDTM). A compositionally biased stretch (acidic residues) spans 21–33 (VEEEGEIVGESDD). EIF4G-binding regions lie at residues 47-50 (HALE) and 57-93 (FDNP…NNIH). MRNA contacts are provided by residues 65–70 (KQAAWG), K97, and 115–116 (WE). C120 and C158 form a disulfide bridge. Residues 141 to 150 (YTLLAMIGEQ) form an EIF4G-binding region. MRNA contacts are provided by residues 165–170 (RVRQEK) and 210–214 (KKLDR).

It belongs to the eukaryotic initiation factor 4E family. As to quaternary structure, EIF4F is a multi-subunit complex, the composition of which varies with external and internal environmental conditions. It is composed of at least EIF4A, EIF4E and EIF4G. EIF4E is also known to interact with other partners. In higher plants two isoforms of EIF4F have been identified, named isoform EIF4F and isoform EIF(iso)4F. Isoform EIF4F has subunits p220 and p26, whereas isoform EIF(iso)4F has subunits p82 and p28. (Microbial infection) Interacts with potyvirus viral genome-linked protein (VPg); this interaction is possible in susceptible hosts but impaired in resistant plants. In terms of processing, according to the redox status, the Cys-120-Cys-158 disulfide bridge may have a role in regulating protein function by affecting its ability to bind capped mRNA. In terms of tissue distribution, strongly expressed in susceptible plants but not in resistant ones.

The protein localises to the nucleus. The protein resides in the cytoplasm. Component of the protein complex eIF4F, which is involved in the recognition of the mRNA cap, ATP-dependent unwinding of 5'-terminal secondary structure and recruitment of mRNA to the ribosome. Recognizes and binds the 7-methylguanosine-containing mRNA cap during an early step in the initiation of protein synthesis and facilitates ribosome binding by inducing the unwinding of the mRNAs secondary structures. Key component of recessive resistance to potyviruses. Its function is as follows. (Microbial infection) Susceptibility host factor required for viral infection (e.g. potato virus Y (PVY) and pepper mottle virus (PepMoV)) by recruiting viral RNAs to the host ribosomal complex via an interaction with viral genome-linked protein (VPg). This chain is Eukaryotic translation initiation factor 4E-2, found in Nicotiana tabacum (Common tobacco).